The sequence spans 448 residues: tRNA(Ile)-lysidine synthase (448 aa).

30–35 (GGGADS) lines the ATP pocket.

Belongs to the tRNA(Ile)-lysidine synthase family.

Its subcellular location is the cytoplasm. The enzyme catalyses cytidine(34) in tRNA(Ile2) + L-lysine + ATP = lysidine(34) in tRNA(Ile2) + AMP + diphosphate + H(+). Its function is as follows. Ligates lysine onto the cytidine present at position 34 of the AUA codon-specific tRNA(Ile) that contains the anticodon CAU, in an ATP-dependent manner. Cytidine is converted to lysidine, thus changing the amino acid specificity of the tRNA from methionine to isoleucine. This chain is tRNA(Ile)-lysidine synthase, found in Idiomarina loihiensis (strain ATCC BAA-735 / DSM 15497 / L2-TR).